The chain runs to 252 residues: 5'-nucleotidase SurE (252 aa).

4 residues coordinate a divalent metal cation: D8, D9, S40, and N92.

It belongs to the SurE nucleotidase family. The cofactor is a divalent metal cation.

Its subcellular location is the cytoplasm. The enzyme catalyses a ribonucleoside 5'-phosphate + H2O = a ribonucleoside + phosphate. Nucleotidase that shows phosphatase activity on nucleoside 5'-monophosphates. The polypeptide is 5'-nucleotidase SurE (Mesorhizobium japonicum (strain LMG 29417 / CECT 9101 / MAFF 303099) (Mesorhizobium loti (strain MAFF 303099))).